The sequence spans 331 residues: L-lactate dehydrogenase A chain (331 aa).

NAD(+)-binding positions include 29–57 (GMVGMASAISILIKDLGDELAMVDVMEDK) and Arg-98. Residues Arg-105, Asn-137, and Arg-168 each contribute to the substrate site. NAD(+) is bound at residue Asn-137. Residue His-192 is the Proton acceptor of the active site. Thr-247 serves as a coordination point for substrate.

It belongs to the LDH/MDH superfamily. LDH family. As to quaternary structure, homotetramer.

The protein localises to the cytoplasm. The catalysed reaction is (S)-lactate + NAD(+) = pyruvate + NADH + H(+). It participates in fermentation; pyruvate fermentation to lactate; (S)-lactate from pyruvate: step 1/1. Interconverts simultaneously and stereospecifically pyruvate and lactate with concomitant interconversion of NADH and NAD(+). The protein is L-lactate dehydrogenase A chain (ldha) of Harpagifer antarcticus (Antarctic spiny plunderfish).